The sequence spans 224 residues: Uracil-DNA glycosylase (224 aa).

Catalysis depends on aspartate 61, which acts as the Proton acceptor.

This sequence belongs to the uracil-DNA glycosylase (UDG) superfamily. UNG family.

It is found in the cytoplasm. The enzyme catalyses Hydrolyzes single-stranded DNA or mismatched double-stranded DNA and polynucleotides, releasing free uracil.. Its function is as follows. Excises uracil residues from the DNA which can arise as a result of misincorporation of dUMP residues by DNA polymerase or due to deamination of cytosine. The polypeptide is Uracil-DNA glycosylase (Mannheimia succiniciproducens (strain KCTC 0769BP / MBEL55E)).